Here is a 314-residue protein sequence, read N- to C-terminus: Protein YIF1B (314 aa).

Methionine 1 bears the N-acetylmethionine mark. The segment covering methionine 1–glycine 12 has biased composition (low complexity). Residues methionine 1–alanine 55 form a disordered region. The Cytoplasmic portion of the chain corresponds to methionine 1 to aspartate 156. Threonine 13 bears the Phosphothreonine mark. A compositionally biased stretch (basic residues) spans arginine 15–isoleucine 25. Residue serine 65 is modified to Phosphoserine. Residues leucine 157–threonine 177 traverse the membrane as a helical segment. Residues glutamine 178 to serine 192 lie on the Extracellular side of the membrane. The helical transmembrane segment at alanine 193–valine 213 threads the bilayer. At asparagine 214–threonine 219 the chain is on the cytoplasmic side. Residues isoleucine 220–glycine 240 form a helical membrane-spanning segment. Position 241 (leucine 241) is a topological domain, extracellular. The chain crosses the membrane as a helical span at residues leucine 242 to phenylalanine 262. The Cytoplasmic segment spans residues methionine 263–tyrosine 292. A helical transmembrane segment spans residues leucine 293–valine 313. A topological domain (extracellular) is located at residue arginine 314.

The protein belongs to the YIF1 family. As to quaternary structure, interacts with HTR1A (via C-terminus). Interacts with ABCB9 (via TMD0); this interaction allows (but is not essential) the ER-to-Golgi trafficking and strongly depends on a salt bridge within TMD0.

It localises to the endoplasmic reticulum membrane. It is found in the golgi apparatus membrane. Its subcellular location is the endoplasmic reticulum-Golgi intermediate compartment membrane. Its function is as follows. Functions in endoplasmic reticulum to Golgi vesicle-mediated transport and regulates the proper organization of the endoplasmic reticulum and the Golgi. Plays a key role in targeting to neuronal dendrites receptors such as HTR1A. Plays also a role in primary cilium and sperm flagellum assembly probably through protein transport to these compartments. In Homo sapiens (Human), this protein is Protein YIF1B.